A 245-amino-acid polypeptide reads, in one-letter code: Ribonuclease 3 (245 aa).

Positions alanine 19–glycine 144 constitute an RNase III domain. Glutamate 57 is a Mg(2+) binding site. Aspartate 61 is a catalytic residue. The Mg(2+) site is built by aspartate 130 and glutamate 133. The active site involves glutamate 133. The DRBM domain occupies aspartate 169–valine 238.

This sequence belongs to the ribonuclease III family. Homodimer. Mg(2+) is required as a cofactor.

The protein localises to the cytoplasm. The enzyme catalyses Endonucleolytic cleavage to 5'-phosphomonoester.. Its function is as follows. Digests double-stranded RNA. Involved in the processing of primary rRNA transcript to yield the immediate precursors to the large and small rRNAs (23S and 16S). Processes some mRNAs, and tRNAs when they are encoded in the rRNA operon. Processes pre-crRNA and tracrRNA of type II CRISPR loci if present in the organism. The protein is Ribonuclease 3 of Brucella abortus (strain S19).